Here is a 467-residue protein sequence, read N- to C-terminus: Asparagine--tRNA ligase (467 aa).

This sequence belongs to the class-II aminoacyl-tRNA synthetase family. As to quaternary structure, homodimer.

Its subcellular location is the cytoplasm. The catalysed reaction is tRNA(Asn) + L-asparagine + ATP = L-asparaginyl-tRNA(Asn) + AMP + diphosphate + H(+). This chain is Asparagine--tRNA ligase, found in Bacteroides fragilis (strain ATCC 25285 / DSM 2151 / CCUG 4856 / JCM 11019 / LMG 10263 / NCTC 9343 / Onslow / VPI 2553 / EN-2).